The following is a 184-amino-acid chain: Nutrient stress-induced DNA-binding protein (184 aa).

This sequence belongs to the Dps family. As to quaternary structure, hexamer.

In terms of biological role, involved in protection of chromosomal DNA from damage under nutrient-limited and oxidative stress conditions. Binds heme. This is Nutrient stress-induced DNA-binding protein (dpsA) from Nostoc sp. (strain PCC 7120 / SAG 25.82 / UTEX 2576).